The sequence spans 492 residues: MAKFIMVVGTSSNSGKTVLVSGICRMLSNKGYKVAPFKSQNMSLNSRVSIEDGEIAVAQYTQAMAARAEPSIHFNPILLKPKGNFVSQVIVHGIPYEDRDYNEYRSKKDVLLEKIKESIEYLDKNYDYVVIEGAGSCCEINLLKDDIANLRIAEISGADAILVSDIDRGGVFAAIYGTVKLLPENWRKLLKGFVINKFRGNLDVLKDGFEKIEELTNIPVIGTIPYDETLILPEEDSQALEGKRVFGNVKSPIEVNIVKFSKIANFTDVDPLSSDCLMKYIDFNDDITGDILILPGTRCSTVEMDLMKKHGMDKKIMEFVENGGIVLGICGGYQTLGKILIDENFSEGDVGTISGLGLFDMETTFGNKKAIKNSTGTISIFDQNFDVMGYELHEGHSISNETPLISLSRGFGNCGDSYDGSFKVIGDSYIFGTYFHGILENFEFRNYLVNIVNNKKNLSRIENDNYAEIFNENMDKLSKLIEENLDLSKIIK.

A GATase cobBQ-type domain is found at 252–444; that stretch reads PIEVNIVKFS…FHGILENFEF (193 aa). Cys330 functions as the Nucleophile in the catalytic mechanism. Residue His436 is part of the active site.

The protein belongs to the CobB/CobQ family. CobQ subfamily.

It participates in cofactor biosynthesis; adenosylcobalamin biosynthesis. In terms of biological role, catalyzes amidations at positions B, D, E, and G on adenosylcobyrinic A,C-diamide. NH(2) groups are provided by glutamine, and one molecule of ATP is hydrogenolyzed for each amidation. The protein is Probable cobyric acid synthase of Methanococcus maripaludis (strain C6 / ATCC BAA-1332).